Here is a 392-residue protein sequence, read N- to C-terminus: MIETRTDRMLLNFGPHHPSMHGVLRLLVTLDGENIVDCEPVIGYLHRGMEKIAENRTVVQYLPYVSRWDYGAGMFNEAITVNAVEKLAGISVPRRASYLRVIMLELTRITNHLLWFGPFLADLGAQTPFLYAMREREWILDLFEAVTGMRLINNNYFRVGGVAVDLPYGWTEKCLDFCEYFLPKVDEYERLVTDNPIFRRRLEGVGAISKQDAINWGLSGPMLRACGVNWDLRKVDHYECYDDFDWEVAVYPEGDCLARYRVRMKEMRESCKIVQQAVKALPGGPFENLEAKRMLEGPKSEWNKGDYQFISKKPSANFKIPKGEAYVRVESAKGELGIYIVGDDNVCPWRWKIRPPGFVNLQVLPQLIRGMKVADMIAILGSIDIIMGEVDR.

Belongs to the complex I 49 kDa subunit family. NDH-1 can be composed of about 15 different subunits; different subcomplexes with different compositions have been identified which probably have different functions.

Its subcellular location is the cellular thylakoid membrane. It carries out the reaction a plastoquinone + NADH + (n+1) H(+)(in) = a plastoquinol + NAD(+) + n H(+)(out). It catalyses the reaction a plastoquinone + NADPH + (n+1) H(+)(in) = a plastoquinol + NADP(+) + n H(+)(out). Functionally, NDH-1 shuttles electrons from an unknown electron donor, via FMN and iron-sulfur (Fe-S) centers, to quinones in the respiratory and/or the photosynthetic chain. The immediate electron acceptor for the enzyme in this species is believed to be plastoquinone. Couples the redox reaction to proton translocation, and thus conserves the redox energy in a proton gradient. Cyanobacterial NDH-1 also plays a role in inorganic carbon-concentration. The chain is NAD(P)H-quinone oxidoreductase subunit H from Synechococcus sp. (strain JA-2-3B'a(2-13)) (Cyanobacteria bacterium Yellowstone B-Prime).